A 328-amino-acid polypeptide reads, in one-letter code: MVKRLVVTAGEPAGIGPDLVLALSKEHWPHQLVVCADKKMLAQRAEQLGINVTLLDYDASTAPSPQQAGTLVVEHIDMPSTCVAGQLNEENGHYVLKTLERAALGCMKSEFDAIVTGPVHKGVINRAGVAFSGHTEFFAELSNTPLVVMMLATEGLRVALVTTHIPLAYVSKAVTAERLQKIIDILHRDLVEKFAIAEPKIYVCGLNPHAGEDGCLGREEIETITPTLEKIRQEKGIHLLGPLPADTIFNEKYLNDADAVLGMYHDQVLPVLKYKGFGQSVNITLGLPFIRTSVDHGTALDLAGTGQANTGSFRTALQHAIELVEKKQ.

Substrate is bound by residues His-134 and Thr-135. The a divalent metal cation site is built by His-164, His-209, and His-265. 3 residues coordinate substrate: Lys-273, Asn-282, and Arg-291.

It belongs to the PdxA family. As to quaternary structure, homodimer. Requires Zn(2+) as cofactor. Mg(2+) is required as a cofactor. The cofactor is Co(2+).

The protein localises to the cytoplasm. The enzyme catalyses 4-(phosphooxy)-L-threonine + NAD(+) = 3-amino-2-oxopropyl phosphate + CO2 + NADH. It participates in cofactor biosynthesis; pyridoxine 5'-phosphate biosynthesis; pyridoxine 5'-phosphate from D-erythrose 4-phosphate: step 4/5. Catalyzes the NAD(P)-dependent oxidation of 4-(phosphooxy)-L-threonine (HTP) into 2-amino-3-oxo-4-(phosphooxy)butyric acid which spontaneously decarboxylates to form 3-amino-2-oxopropyl phosphate (AHAP). This chain is 4-hydroxythreonine-4-phosphate dehydrogenase, found in Vibrio vulnificus (strain YJ016).